Consider the following 85-residue polypeptide: MGRLYSGNLAAFKAATNKLFQLDLAVIYDDWYDAYTRKDCIRLRIEDRSGNLIDTSTFYHHDEDVLFNMCTDWLNHMYDQLKDWK.

Interacts with host dGTPase/dgt.

In terms of biological role, plays a role in increasing the intracellular pool of dGTP. Interacts with and inhibits host dGTPase/dgt. The complex made of the host dGTPase and gene 1.2 protein creates a GTP-binding site of high affinity. Subsequent binding of GTP to the enzyme-inhibitor complex inhibits its dissociation. The chain is Inhibitor of dGTPase from Escherichia coli (Bacteriophage T7).